The primary structure comprises 128 residues: Small ribosomal subunit protein uS11 (128 aa).

Belongs to the universal ribosomal protein uS11 family. As to quaternary structure, part of the 30S ribosomal subunit. Interacts with proteins S7 and S18. Binds to IF-3.

In terms of biological role, located on the platform of the 30S subunit, it bridges several disparate RNA helices of the 16S rRNA. Forms part of the Shine-Dalgarno cleft in the 70S ribosome. This is Small ribosomal subunit protein uS11 from Desulforudis audaxviator (strain MP104C).